Here is a 289-residue protein sequence, read N- to C-terminus: G1/S-specific cyclin-D2 (289 aa).

Positions 26–151 (LQNLLTIEER…VLGKLKWNLA (126 aa)) constitute a Cyclin N-terminal domain. The tract at residues 264 to 289 (QHNAGSKSVEDPDQATTPTDVRDVDL) is disordered. S271 is subject to Phosphoserine. Residue T280 is modified to Phosphothreonine.

The protein belongs to the cyclin family. Cyclin D subfamily. Interacts with either CDK4 or CDK6 protein kinase to form a serine/threonine kinase holoenzyme complex. The cyclin subunit imparts substrate specificity to the complex. Post-translationally, phosphorylation at Thr-280 by MAP kinases is required for ubiquitination and degradation by the DCX(AMBRA1) complex. In terms of processing, ubiquitinated by the DCX(AMBRA1) complex during the transition from G1 to S cell phase, leading to its degradation: ubiquitination is dependent on Thr-280 phosphorylation. The DCX(AMBRA1) complex represents the major regulator of CCND2 stability during the G1/S transition. Polyubiquitinated by the SCF(FBXL2) complex, leading to proteasomal degradation.

The protein resides in the nucleus. Its subcellular location is the cytoplasm. The protein localises to the nucleus membrane. Functionally, regulatory component of the cyclin D2-CDK4 (DC) complex that phosphorylates and inhibits members of the retinoblastoma (RB) protein family including RB1 and regulates the cell-cycle during G(1)/S transition. Phosphorylation of RB1 allows dissociation of the transcription factor E2F from the RB/E2F complex and the subsequent transcription of E2F target genes which are responsible for the progression through the G(1) phase. Hypophosphorylates RB1 in early G(1) phase. Cyclin D-CDK4 complexes are major integrators of various mitogenenic and antimitogenic signals. The polypeptide is G1/S-specific cyclin-D2 (Mus musculus (Mouse)).